Here is a 424-residue protein sequence, read N- to C-terminus: UPF0415 protein C7orf25 homolog (424 aa).

It belongs to the UPF0415 family.

The polypeptide is UPF0415 protein C7orf25 homolog (Xenopus laevis (African clawed frog)).